The following is a 198-amino-acid chain: Riboflavin synthase (198 aa).

2 Lumazine-binding repeats span residues 1 to 95 and 96 to 188; these read MFSG…IGGH and FVSG…VDTV. 2,4-dihydroxypteridine contacts are provided by residues 4-6, 46-48, 60-65, 99-101, Lys130, 139-141, and 153-158; these read GII, CLT, DVTEET, GHV, SLT, and SVIPET.

As to quaternary structure, homotrimer.

It catalyses the reaction 2 6,7-dimethyl-8-(1-D-ribityl)lumazine + H(+) = 5-amino-6-(D-ribitylamino)uracil + riboflavin. The protein operates within cofactor biosynthesis; riboflavin biosynthesis; riboflavin from 2-hydroxy-3-oxobutyl phosphate and 5-amino-6-(D-ribitylamino)uracil: step 2/2. Catalyzes the dismutation of two molecules of 6,7-dimethyl-8-ribityllumazine, resulting in the formation of riboflavin and 5-amino-6-(D-ribitylamino)uracil. The polypeptide is Riboflavin synthase (ribE) (Chlamydia muridarum (strain MoPn / Nigg)).